Consider the following 150-residue polypeptide: Ribosome maturation factor RimP (150 aa).

Belongs to the RimP family.

It is found in the cytoplasm. Required for maturation of 30S ribosomal subunits. The sequence is that of Ribosome maturation factor RimP from Thermotoga petrophila (strain ATCC BAA-488 / DSM 13995 / JCM 10881 / RKU-1).